We begin with the raw amino-acid sequence, 360 residues long: MTATLQQRKSANVWEQFCEWITSTNNRLYIGWFGVLMIPTLLAATTCFIIAFIAAPPVDIDGIREPVAGSLIYGNNIISGAVVPSSNAIGLHFYPIWEAASLDEWLYNGGPYQLVIFHFLTGVFCYLGREWELSYRLGMRPWICLAFSAPVAAATAVFLIYPIGQGSFSDGMPLGISGTFNFMIVFQAEHNILMHPFHMLGVAGVFGGSLFSAMHGSLVTSSLVRETTENESQNYGYKFGQEEETYNIVAAHGYFGRLIFQYASFNNSRQLHFFLAAWPVIGIWFTALGVSTMAFNLNGFNFNQSIIDSQGRVINTWADIINRANLGMEVMHERNAHNFPLDLAAGEVAPVALTAPAING.

The next 3 membrane-spanning stretches (helical) occupy residues 29–46, 118–133, and 142–156; these read YIGWFGVLMIPTLLAATT, HFLTGVFCYLGREWEL, and WICLAFSAPVAAATA. A chlorophyll a-binding site is contributed by His-118. Tyr-126 is a pheophytin a binding site. The [CaMn4O5] cluster site is built by Asp-170 and Glu-189. The helical transmembrane segment at 197-218 threads the bilayer; that stretch reads FHMLGVAGVFGGSLFSAMHGSL. His-198 serves as a coordination point for chlorophyll a. A quinone contacts are provided by residues His-215 and 264–265; that span reads SF. His-215 contacts Fe cation. His-272 lines the Fe cation pocket. A helical membrane pass occupies residues 274–288; sequence FLAAWPVIGIWFTAL. [CaMn4O5] cluster contacts are provided by His-332, Glu-333, Asp-342, and Ala-344. A propeptide spanning residues 345-360 is cleaved from the precursor; the sequence is AGEVAPVALTAPAING.

It belongs to the reaction center PufL/M/PsbA/D family. PSII is composed of 1 copy each of membrane proteins PsbA, PsbB, PsbC, PsbD, PsbE, PsbF, PsbH, PsbI, PsbJ, PsbK, PsbL, PsbM, PsbT, PsbX, PsbY, PsbZ, Psb30/Ycf12, peripheral proteins PsbO, CyanoQ (PsbQ), PsbU, PsbV and a large number of cofactors. It forms dimeric complexes. The D1/D2 heterodimer binds P680, chlorophylls that are the primary electron donor of PSII, and subsequent electron acceptors. It shares a non-heme iron and each subunit binds pheophytin, quinone, additional chlorophylls, carotenoids and lipids. D1 provides most of the ligands for the Mn4-Ca-O5 cluster of the oxygen-evolving complex (OEC). There is also a Cl(-1) ion associated with D1 and D2, which is required for oxygen evolution. The PSII complex binds additional chlorophylls, carotenoids and specific lipids. is required as a cofactor. Post-translationally, tyr-161 forms a radical intermediate that is referred to as redox-active TyrZ, YZ or Y-Z. In terms of processing, C-terminally processed by CtpA; processing is essential to allow assembly of the oxygen-evolving complex and thus photosynthetic growth.

The protein localises to the cellular thylakoid membrane. It catalyses the reaction 2 a plastoquinone + 4 hnu + 2 H2O = 2 a plastoquinol + O2. In terms of biological role, photosystem II (PSII) is a light-driven water:plastoquinone oxidoreductase that uses light energy to abstract electrons from H(2)O, generating O(2) and a proton gradient subsequently used for ATP formation. It consists of a core antenna complex that captures photons, and an electron transfer chain that converts photonic excitation into a charge separation. The D1/D2 (PsbA/PsbD) reaction center heterodimer binds P680, the primary electron donor of PSII as well as several subsequent electron acceptors. This chain is Photosystem II protein D1 2, found in Trichormus variabilis (strain ATCC 29413 / PCC 7937) (Anabaena variabilis).